The primary structure comprises 87 residues: Small ribosomal subunit protein bS20 (87 aa).

The protein belongs to the bacterial ribosomal protein bS20 family.

Its function is as follows. Binds directly to 16S ribosomal RNA. This chain is Small ribosomal subunit protein bS20, found in Roseobacter denitrificans (strain ATCC 33942 / OCh 114) (Erythrobacter sp. (strain OCh 114)).